Here is a 501-residue protein sequence, read N- to C-terminus: Isoflavone 3'-hydroxylase (501 aa).

A helical transmembrane segment spans residues 7-24; that stretch reads LLSLSFIITIKILLKITS. Heme is bound at residue cysteine 439.

The protein belongs to the cytochrome P450 family. Heme is required as a cofactor. In terms of tissue distribution, expressed constitutively in leaves and stems, but not in roots.

It localises to the endoplasmic reticulum membrane. The enzyme catalyses formononetin + reduced [NADPH--hemoprotein reductase] + O2 = calycosin + oxidized [NADPH--hemoprotein reductase] + H2O + H(+). Involved in the biosynthesis of the pterocarpin phytoalexins. Acts on isoflavones with a 4'-methoxy group on the B-ring, such as biochanin A, formononetin and 2'-hydroxyformononetin. Has a low activity with daidzein and pseudobaptigenin, and no activity with the 7-O-methylated isoflavonoids isoformononetin and prunetin. This chain is Isoflavone 3'-hydroxylase, found in Medicago truncatula (Barrel medic).